A 206-amino-acid polypeptide reads, in one-letter code: Outer-membrane lipoprotein carrier protein (206 aa).

An N-terminal signal peptide occupies residues 1–21 (MKKLLCAVLLSPLLYSNAVLA).

It belongs to the LolA family. In terms of assembly, monomer.

The protein localises to the periplasm. Functionally, participates in the translocation of lipoproteins from the inner membrane to the outer membrane. Only forms a complex with a lipoprotein if the residue after the N-terminal Cys is not an aspartate (The Asp acts as a targeting signal to indicate that the lipoprotein should stay in the inner membrane). This chain is Outer-membrane lipoprotein carrier protein, found in Shewanella sp. (strain MR-4).